The sequence spans 101 residues: Urease subunit beta 1 (101 aa).

The protein belongs to the urease beta subunit family. In terms of assembly, heterotrimer of UreA (gamma), UreB (beta) and UreC (alpha) subunits. Three heterotrimers associate to form the active enzyme.

It localises to the cytoplasm. It carries out the reaction urea + 2 H2O + H(+) = hydrogencarbonate + 2 NH4(+). It functions in the pathway nitrogen metabolism; urea degradation; CO(2) and NH(3) from urea (urease route): step 1/1. Disruption of the ure1 gene cluster suggests that it protects brucellae during their passage through the stomach. The major route of infection in human brucellosis is oral. This is Urease subunit beta 1 from Brucella abortus (strain 2308).